The sequence spans 1482 residues: Chromosome partition protein MukB (1482 aa).

34–41 (GGNGAGKS) is a binding site for ATP. Coiled-coil stretches lie at residues 326–416 (LEAD…AIQY), 509–603 (RHLA…RAPV), 780–805 (RAAR…ATLS), 835–923 (EAEI…AKLE), 979–1116 (LSGN…AKAG), and 1210–1265 (EAIE…LQSV). Residues 666 to 783 (PGGAEDSRLN…TLPLFGRAAR (118 aa)) are flexible hinge.

The protein belongs to the SMC family. MukB subfamily. As to quaternary structure, homodimerization via its hinge domain. Binds to DNA via its C-terminal region. Interacts, and probably forms a ternary complex, with MukE and MukF via its C-terminal region. The complex formation is stimulated by calcium or magnesium. Interacts with tubulin-related protein FtsZ.

The protein resides in the cytoplasm. Its subcellular location is the nucleoid. Functionally, plays a central role in chromosome condensation, segregation and cell cycle progression. Functions as a homodimer, which is essential for chromosome partition. Involved in negative DNA supercoiling in vivo, and by this means organize and compact chromosomes. May achieve or facilitate chromosome segregation by condensation DNA from both sides of a centrally located replisome during cell division. The chain is Chromosome partition protein MukB from Enterobacter sp. (strain 638).